The primary structure comprises 314 residues: GTPase-interacting component 1 (314 aa).

3 disordered regions span residues 112 to 156 (SRRH…KHDV), 199 to 221 (TMDS…QLDS), and 241 to 261 (LGDS…SFSG). A CRIB domain is found at 126–139 (ISTPFDFHHISHAN). Over residues 140–156 (GKREDNPLESHEEKHDV) the composition is skewed to basic and acidic residues. Residues 208–221 (ETNNTPNGNKQLDS) are compositionally biased toward polar residues. The segment covering 251 to 260 (PSSPSVSSFS) has biased composition (low complexity).

Belongs to the BORG/CEP family. Interacts with GTP-bound CDC42.

It localises to the bud neck. Its subcellular location is the bud tip. The protein localises to the cytoplasm. The protein resides in the cell cortex. It is found in the cytoskeleton. In terms of biological role, required for cell size and shape control, bud site selection, bud emergence, actin cytoskeletal organization, mitotic spindle orientation/positioning, and mating projection formation in response to mating pheromone. The sequence is that of GTPase-interacting component 1 (GIC1) from Saccharomyces cerevisiae (strain ATCC 204508 / S288c) (Baker's yeast).